A 204-amino-acid chain; its full sequence is Lipoprotein signal peptidase (204 aa).

Residues 1–42 (MAEAERIIGTPDIPDAAGEGQERPDADPEREQQEQEQAPERT) form a disordered region. Residues 20–42 (GQERPDADPEREQQEQEQAPERT) are compositionally biased toward basic and acidic residues. The next 3 helical transmembrane spans lie at 50 to 70 (VLFAVALFAYLLDLGSKMLVV), 100 to 120 (FGEAFTIIFTVIAAAVIVVIA), and 126 to 146 (LHSLPWAIALGLLLGGALGNL). Catalysis depends on residues Asp163 and Asp177. A helical transmembrane segment spans residues 170 to 190 (FAVFNLADSAIVCGGILIVIL).

Belongs to the peptidase A8 family.

It is found in the cell membrane. The catalysed reaction is Release of signal peptides from bacterial membrane prolipoproteins. Hydrolyzes -Xaa-Yaa-Zaa-|-(S,diacylglyceryl)Cys-, in which Xaa is hydrophobic (preferably Leu), and Yaa (Ala or Ser) and Zaa (Gly or Ala) have small, neutral side chains.. The protein operates within protein modification; lipoprotein biosynthesis (signal peptide cleavage). Functionally, this protein specifically catalyzes the removal of signal peptides from prolipoproteins. This is Lipoprotein signal peptidase from Streptomyces coelicolor (strain ATCC BAA-471 / A3(2) / M145).